A 788-amino-acid chain; its full sequence is Integrin beta-3 (788 aa).

A signal peptide spans 1-26 (MRARPRPRPLWATVLALGALAGVGVG). The Extracellular portion of the chain corresponds to 27–718 (GPNICTTRGV…EEPECPKGPD (692 aa)). The region spanning 30–76 (ICTTRGVSSCQQCLAVSPMCAWCSDEALPLGSPRCDLKENLLKDNCA) is the PSI domain. Disulfide bonds link Cys31–Cys49, Cys39–Cys461, Cys42–Cys64, Cys52–Cys75, Cys203–Cys210, Cys258–Cys299, Cys400–Cys412, Cys432–Cys459, Cys463–Cys483, Cys474–Cys486, Cys488–Cys497, Cys499–Cys529, Cys512–Cys527, Cys521–Cys532, Cys534–Cys547, Cys549–Cys570, Cys554–Cys568, Cys562–Cys573, and Cys575–Cys584. N-linked (GlcNAc...) asparagine glycosylation occurs at Asn125. A VWFA domain is found at 135-377 (DYPVDIYYLM…QLIVDAYGKI (243 aa)). Mg(2+) is bound by residues Ser147 and Ser149. Positions 149, 152, 153, and 184 each coordinate Ca(2+). The segment at 203–210 (CYDMKTTC) is involved in CX3CL1-, NRG1-, FGF1- and IGF1-binding. 5 residues coordinate Ca(2+): Asn241, Asp243, Pro245, Glu246, and Asp277. Mg(2+) is bound at residue Glu246. The interval 293-313 (QPNDGQCHVGSDNHYSASTTM) is CX3CL1-binding. N-linked (GlcNAc...) asparagine glycosylation is present at Asn346. Met361 provides a ligand contact to Ca(2+). Residue Asn397 is glycosylated (N-linked (GlcNAc...) asparagine). 4 I-EGF domains span residues 463 to 498 (CQAQAEPNSHRCNNGNGTFECGVCRCGPGWLGSQCE), 499 to 548 (CSEE…KYCE), 549 to 585 (CDDFSCVRYKGEMCSGHGQCSCGDCLCDSDWTGYYCN), and 586 to 625 (CTTRTDTCMSSNGLLCSGRGKCECGSCVCIQPGSYGDTCE). N-linked (GlcNAc...) asparagine glycosylation is present at Asn478. N-linked (GlcNAc...) asparagine glycosylation is present at Asn585. 9 disulfides stabilise this stretch: Cys586/Cys609, Cys593/Cys607, Cys601/Cys612, Cys614/Cys624, Cys627/Cys630, Cys634/Cys681, Cys640/Cys661, Cys643/Cys657, and Cys689/Cys713. N-linked (GlcNAc...) asparagine glycosylation is present at Asn680. A helical membrane pass occupies residues 719–741 (ILVVLLSVMGAILLIGLAALLIW). Topologically, residues 742-788 (KLLITIHDRKEFAKFEEERARAKWDTANNPLYKEATSTFTNITYRGT) are cytoplasmic. Thr767 carries the phosphothreonine modification. The residue at position 773 (Tyr773) is a Phosphotyrosine. The short motif at 777–783 (TSTFTNI) is the LIR element. Phosphothreonine; by PDPK1 and PKB/AKT1; in vitro is present on Thr779. Tyr785 is modified (phosphotyrosine).

Belongs to the integrin beta chain family. In terms of assembly, heterodimer of an alpha and a beta subunit. Beta-3 (ITGB3) associates with either alpha-IIb (ITGA2B) or alpha-V (ITGAV). Isoform Beta-3C interacts with FLNB. Interacts with COMP. Interacts with PDIA6 following platelet stimulation. Interacts with SYK; upon activation by ITGB3 promotes platelet adhesion. Interacts with MYO10. Interacts with DAB2. Interacts with FERMT2. Interacts with EMP2; regulates the levels of the heterodimer ITGA5:ITGB3 integrin expression on the plasma membrane. Integrin ITGAV:ITGB3 interacts with FBLN5 (via N-terminus). ITGAV:ITGB3 interacts with CCN3. ITGAV:ITGB3 and ITGA2B:ITGB3 interact with SELP (via C-type lectin domain); the interaction mediates cell-cell interaction and adhesion. ITGAV:ITGB3 is found in a ternary complex with CX3CR1 and CX3CL1. ITGAV:ITGB3 is found in a ternary complex with NRG1 and ERBB3. ITGAV:ITGB3 is found in a ternary complex with FGF1 and FGFR1. ITGAV:ITGB3 interacts with FGF2; it is likely that FGF2 can simultaneously bind ITGAV:ITGB3 and FGF receptors. ITGAV:ITGB3 binds to IL1B. ITGAV:ITGB3 is found in a ternary complex with IGF1 and IGF1R. ITGAV:ITGB3 interacts with IGF2. ITGAV:ITGB3 interacts with FBN1. ITGAV:ITGB3 interacts with CD9, CD81 and CD151 (via second extracellular domain). Interacts (via the allosteric site (site 2)) with CXCL12 in a CXCR4-independent manner. Interacts with MXRA8/DICAM; the interaction inhibits ITGAV:ITGB3 heterodimer formation. ITGAV:ITGB3 interacts with PTN. Forms a complex with PTPRZ1 and PTN that stimulates endothelial cell migration through ITGB3 Tyr-773 phosphorylation. ITGAV:ITGB3 interacts with SLC6A4. Interacts with SLC6A4 (via C-terminus); this interaction regulates SLC6A4 trafficking. ITGA2B:ITGB3 interacts with PPIA/CYPA; the interaction is ROS and PPIase activity-dependent and is increased in the presence of thrombin. Interacts with tensin TNS3; TNS3 also interacts with PEAK1, thus acting as an adapter molecule to bridge the association of PEAK1 with ITGB3. Interacts with TM4SF19. (Microbial infection) Integrin ITGAV:ITGB3 interacts with herpes virus 8/HHV-8 glycoprotein B. As to quaternary structure, (Microbial infection) Integrin ITGAV:ITGB3 interacts with coxsackievirus A9 capsid proteins. In terms of assembly, (Microbial infection) Interacts with Hantaan virus glycoprotein G. (Microbial infection) Integrin ITGAV:ITGB3 interacts with cytomegalovirus/HHV-5 gH:gL proteins. As to quaternary structure, (Microbial infection) Integrin ITGA5:ITGB3 interacts with human metapneumovirus fusion protein. In terms of assembly, (Microbial infection) Integrin ITGAV:ITGB3 interacts with human parechovirus 1 capsid proteins. (Microbial infection) Integrin ITGAV:ITGB3 interacts with west nile virus envelope protein E. As to quaternary structure, (Microbial infection) Interacts with HIV-1 Tat. ITGAV:ITGB3 interacts with AGRA2. In terms of processing, phosphorylated on tyrosine residues in response to thrombin-induced platelet aggregation. Probably involved in outside-in signaling. A peptide (AA 740-762) is capable of binding GRB2 only when both Tyr-773 and Tyr-785 are phosphorylated. Phosphorylation of Thr-779 inhibits SHC binding. In terms of tissue distribution, isoform beta-3A and isoform beta-3C are widely expressed. Isoform beta-3A is specifically expressed in osteoblast cells; isoform beta-3C is specifically expressed in prostate and testis.

The protein resides in the cell membrane. The protein localises to the cell projection. Its subcellular location is the lamellipodium membrane. It is found in the cell junction. It localises to the focal adhesion. The protein resides in the postsynaptic cell membrane. The protein localises to the synapse. Functionally, integrin alpha-V/beta-3 (ITGAV:ITGB3) is a receptor for cytotactin, fibronectin, laminin, matrix metalloproteinase-2, osteopontin, osteomodulin, prothrombin, thrombospondin, vitronectin and von Willebrand factor. Integrin alpha-IIb/beta-3 (ITGA2B:ITGB3) is a receptor for fibronectin, fibrinogen, plasminogen, prothrombin, thrombospondin and vitronectin. Integrins alpha-IIb/beta-3 and alpha-V/beta-3 recognize the sequence R-G-D in a wide array of ligands. Integrin alpha-IIb/beta-3 recognizes the sequence H-H-L-G-G-G-A-K-Q-A-G-D-V in fibrinogen gamma chain. Following activation integrin alpha-IIb/beta-3 brings about platelet/platelet interaction through binding of soluble fibrinogen. This step leads to rapid platelet aggregation which physically plugs ruptured endothelial surface. Fibrinogen binding enhances SELP expression in activated platelets. ITGAV:ITGB3 binds to fractalkine (CX3CL1) and acts as its coreceptor in CX3CR1-dependent fractalkine signaling. ITGAV:ITGB3 binds to NRG1 (via EGF domain) and this binding is essential for NRG1-ERBB signaling. ITGAV:ITGB3 binds to FGF1 and this binding is essential for FGF1 signaling. ITGAV:ITGB3 binds to FGF2 and this binding is essential for FGF2 signaling. ITGAV:ITGB3 binds to IGF1 and this binding is essential for IGF1 signaling. ITGAV:ITGB3 binds to IGF2 and this binding is essential for IGF2 signaling. ITGAV:ITGB3 binds to IL1B and this binding is essential for IL1B signaling. ITGAV:ITGB3 binds to PLA2G2A via a site (site 2) which is distinct from the classical ligand-binding site (site 1) and this induces integrin conformational changes and enhanced ligand binding to site 1. ITGAV:ITGB3 acts as a receptor for fibrillin-1 (FBN1) and mediates R-G-D-dependent cell adhesion to FBN1. In brain, plays a role in synaptic transmission and plasticity. Involved in the regulation of the serotonin neurotransmission, is required to localize to specific compartments within the synapse the serotonin receptor SLC6A4 and for an appropriate reuptake of serotonin. Controls excitatory synaptic strength by regulating GRIA2-containing AMPAR endocytosis, which affects AMPAR abundance and composition. ITGAV:ITGB3 act as a receptor for CD40LG. ITGAV:ITGB3 acts as a receptor for IBSP and promotes cell adhesion and migration to IBSP. (Microbial infection) Integrin ITGAV:ITGB3 acts as a receptor for Herpes virus 8/HHV-8. In terms of biological role, (Microbial infection) Integrin ITGAV:ITGB3 acts as a receptor for Coxsackievirus A9. Its function is as follows. (Microbial infection) Acts as a receptor for Hantaan virus. Functionally, (Microbial infection) Integrin ITGAV:ITGB3 acts as a receptor for Cytomegalovirus/HHV-5. (Microbial infection) Integrin ITGA5:ITGB3 acts as a receptor for Human metapneumovirus. In terms of biological role, (Microbial infection) Integrin ITGAV:ITGB3 acts aP05556s a receptor for Human parechovirus 1. Its function is as follows. (Microbial infection) Integrin ITGAV:ITGB3 acts as a receptor for West nile virus. Functionally, (Microbial infection) In case of HIV-1 infection, the interaction with extracellular viral Tat protein seems to enhance angiogenesis in Kaposi's sarcoma lesions. The protein is Integrin beta-3 of Homo sapiens (Human).